Here is a 225-residue protein sequence, read N- to C-terminus: Enolase-phosphatase E1 (225 aa).

Belongs to the HAD-like hydrolase superfamily. MasA/MtnC family. Monomer. Mg(2+) is required as a cofactor.

The enzyme catalyses 5-methylsulfanyl-2,3-dioxopentyl phosphate + H2O = 1,2-dihydroxy-5-(methylsulfanyl)pent-1-en-3-one + phosphate. It functions in the pathway amino-acid biosynthesis; L-methionine biosynthesis via salvage pathway; L-methionine from S-methyl-5-thio-alpha-D-ribose 1-phosphate: step 3/6. It participates in amino-acid biosynthesis; L-methionine biosynthesis via salvage pathway; L-methionine from S-methyl-5-thio-alpha-D-ribose 1-phosphate: step 4/6. In terms of biological role, bifunctional enzyme that catalyzes the enolization of 2,3-diketo-5-methylthiopentyl-1-phosphate (DK-MTP-1-P) into the intermediate 2-hydroxy-3-keto-5-methylthiopentenyl-1-phosphate (HK-MTPenyl-1-P), which is then dephosphorylated to form the acireductone 1,2-dihydroxy-3-keto-5-methylthiopentene (DHK-MTPene). The sequence is that of Enolase-phosphatase E1 from Shewanella loihica (strain ATCC BAA-1088 / PV-4).